The chain runs to 469 residues: 3-isopropylmalate dehydratase large subunit (469 aa).

The [4Fe-4S] cluster site is built by cysteine 347, cysteine 410, and cysteine 413.

The protein belongs to the aconitase/IPM isomerase family. LeuC type 1 subfamily. As to quaternary structure, heterodimer of LeuC and LeuD. [4Fe-4S] cluster serves as cofactor.

The catalysed reaction is (2R,3S)-3-isopropylmalate = (2S)-2-isopropylmalate. Its pathway is amino-acid biosynthesis; L-leucine biosynthesis; L-leucine from 3-methyl-2-oxobutanoate: step 2/4. In terms of biological role, catalyzes the isomerization between 2-isopropylmalate and 3-isopropylmalate, via the formation of 2-isopropylmaleate. The chain is 3-isopropylmalate dehydratase large subunit from Burkholderia vietnamiensis (strain G4 / LMG 22486) (Burkholderia cepacia (strain R1808)).